A 398-amino-acid polypeptide reads, in one-letter code: Protein-glutamate methylesterase/protein-glutamine glutaminase (398 aa).

The 118-residue stretch at Lys-4–Leu-121 folds into the Response regulatory domain. Residue Asp-55 is modified to 4-aspartylphosphate. Residues Arg-133–Ser-200 form a disordered region. Polar residues-rich tracts occupy residues Arg-136–Ile-146 and Arg-168–Ser-200. The CheB-type methylesterase domain occupies Ser-205 to Gly-398. Active-site residues include Ser-217, His-244, and Asp-340.

The protein belongs to the CheB family. Post-translationally, phosphorylated by CheA. Phosphorylation of the N-terminal regulatory domain activates the methylesterase activity.

The protein localises to the cytoplasm. It carries out the reaction [protein]-L-glutamate 5-O-methyl ester + H2O = L-glutamyl-[protein] + methanol + H(+). The catalysed reaction is L-glutaminyl-[protein] + H2O = L-glutamyl-[protein] + NH4(+). In terms of biological role, involved in chemotaxis. Part of a chemotaxis signal transduction system that modulates chemotaxis in response to various stimuli. Catalyzes the demethylation of specific methylglutamate residues introduced into the chemoreceptors (methyl-accepting chemotaxis proteins or MCP) by CheR. Also mediates the irreversible deamidation of specific glutamine residues to glutamic acid. The polypeptide is Protein-glutamate methylesterase/protein-glutamine glutaminase (Shewanella frigidimarina (strain NCIMB 400)).